We begin with the raw amino-acid sequence, 300 residues long: Protease HtpX (300 aa).

Transmembrane regions (helical) follow at residues 4–24 and 40–60; these read ILLFLATNLAVVLVASITLRL and SLLIFCFVIGMAGSLVSLFIS. H145 contributes to the Zn(2+) binding site. E146 is an active-site residue. Zn(2+) is bound at residue H149. Helical transmembrane passes span 153-173 and 193-213; these read GDMVTLALIQGVLNTFVMFFA and LGFFGYMAVVIVAEIVFGLVA. E225 contributes to the Zn(2+) binding site.

The protein belongs to the peptidase M48B family. Requires Zn(2+) as cofactor.

It is found in the cell inner membrane. The sequence is that of Protease HtpX from Chromohalobacter salexigens (strain ATCC BAA-138 / DSM 3043 / CIP 106854 / NCIMB 13768 / 1H11).